The sequence spans 218 residues: Large ribosomal subunit protein bL25 (218 aa).

The segment at 178-218 is disordered; the sequence is VTPPTVTEDPDATEEDNTTAESVEATGERNDDNLDRPGRVE. Residues 185–195 are compositionally biased toward acidic residues; that stretch reads EDPDATEEDNT. Positions 203–218 are enriched in basic and acidic residues; that stretch reads TGERNDDNLDRPGRVE.

This sequence belongs to the bacterial ribosomal protein bL25 family. CTC subfamily. Part of the 50S ribosomal subunit; part of the 5S rRNA/L5/L18/L25 subcomplex. Contacts the 5S rRNA. Binds to the 5S rRNA independently of L5 and L18.

In terms of biological role, this is one of the proteins that binds to the 5S RNA in the ribosome where it forms part of the central protuberance. This Shouchella clausii (strain KSM-K16) (Alkalihalobacillus clausii) protein is Large ribosomal subunit protein bL25.